The sequence spans 153 residues: Deoxyuridine 5'-triphosphate nucleotidohydrolase (153 aa).

Residues 71-73, Asn84, 88-90, and Lys98 each bind substrate; these read RSG and TID.

Belongs to the dUTPase family. Mg(2+) serves as cofactor.

The catalysed reaction is dUTP + H2O = dUMP + diphosphate + H(+). Its pathway is pyrimidine metabolism; dUMP biosynthesis; dUMP from dCTP (dUTP route): step 2/2. Functionally, this enzyme is involved in nucleotide metabolism: it produces dUMP, the immediate precursor of thymidine nucleotides and it decreases the intracellular concentration of dUTP so that uracil cannot be incorporated into DNA. The polypeptide is Deoxyuridine 5'-triphosphate nucleotidohydrolase (Wolbachia pipientis subsp. Culex pipiens (strain wPip)).